Reading from the N-terminus, the 430-residue chain is MSDPKLKPVEDALVTVAKSSQIQLAKDDTSGGTIVGRLLQCQYSKTHKFWETQPVEQFKDIQDTSLPEGPIEPATLVSEVKQEPYNLLGQFEWTICDMNSDDMCLEMYNFLKENSPDDQQIKYEYSKEYLRWALCPPGYYQSWHIGVRVKTSKKLIAFICGRPTRIRVRDEVVKMAKVNSLCVHKKLRSKGLAPLMIKELTRRVKLQNIWQAAYTSSHILSRPVTTSRDWVRMLNPKKLIDVGLTRLRDRMTMSRTVKLYKLPDAPITPGFREMERRDVPAVTALLRNYLSQFAVATDFDDNDVKHWLLPRENIVYSYVVVSPETHDVTDFCSFCNSSITIPGNRKYTTLECAYACCNVATLTSLSQLVNDALIVSKQKGFDVFYASDVMQNESFLKELRFYPLCRQSHYYLYNYRLRNALKPSELGLIL.

Tetradecanoyl-CoA-binding positions include 47–50 (HKFW), 181–183 (LCV), and 189–193 (SKGLA). Leu-430 serves as the catalytic Proton acceptor; via carboxylate.

Belongs to the NMT family.

The enzyme catalyses N-terminal glycyl-[protein] + tetradecanoyl-CoA = N-tetradecanoylglycyl-[protein] + CoA + H(+). Functionally, may add a myristoyl group to the N-terminal glycine residue of certain cellular proteins. The polypeptide is Putative glycylpeptide N-tetradecanoyltransferase 2 (NMT2) (Arabidopsis thaliana (Mouse-ear cress)).